The chain runs to 406 residues: Phosphopentomutase (406 aa).

Residues Asp-10, Asp-305, His-310, Asp-346, His-347, and His-358 each contribute to the Mn(2+) site.

This sequence belongs to the phosphopentomutase family. Requires Mn(2+) as cofactor.

The protein localises to the cytoplasm. It carries out the reaction 2-deoxy-alpha-D-ribose 1-phosphate = 2-deoxy-D-ribose 5-phosphate. The catalysed reaction is alpha-D-ribose 1-phosphate = D-ribose 5-phosphate. The protein operates within carbohydrate degradation; 2-deoxy-D-ribose 1-phosphate degradation; D-glyceraldehyde 3-phosphate and acetaldehyde from 2-deoxy-alpha-D-ribose 1-phosphate: step 1/2. In terms of biological role, isomerase that catalyzes the conversion of deoxy-ribose 1-phosphate (dRib-1-P) and ribose 1-phosphate (Rib-1-P) to deoxy-ribose 5-phosphate (dRib-5-P) and ribose 5-phosphate (Rib-5-P), respectively. The protein is Phosphopentomutase of Methylorubrum extorquens (strain PA1) (Methylobacterium extorquens).